The following is a 303-amino-acid chain: N-acetyl-D-glucosamine kinase (303 aa).

ATP-binding positions include 4–11 (GFDIGGTK) and 133–140 (GVGGGLIF). Positions 157, 177, 179, and 184 each coordinate Zn(2+).

This sequence belongs to the ROK (NagC/XylR) family. NagK subfamily.

It carries out the reaction N-acetyl-D-glucosamine + ATP = N-acetyl-D-glucosamine 6-phosphate + ADP + H(+). The protein operates within cell wall biogenesis; peptidoglycan recycling. Functionally, catalyzes the phosphorylation of N-acetyl-D-glucosamine (GlcNAc) derived from cell-wall degradation, yielding GlcNAc-6-P. The chain is N-acetyl-D-glucosamine kinase from Escherichia coli O157:H7.